We begin with the raw amino-acid sequence, 105 residues long: UPF0235 protein RPR_04990 (105 aa).

Belongs to the UPF0235 family.

In Rickettsia peacockii (strain Rustic), this protein is UPF0235 protein RPR_04990.